The primary structure comprises 359 residues: tRNA-specific 2-thiouridylase MnmA (359 aa).

ATP-binding positions include 7 to 14 (GLSGGVDS) and leucine 33. Cysteine 94 functions as the Nucleophile in the catalytic mechanism. The cysteines at positions 94 and 193 are disulfide-linked. Position 119 (glycine 119) interacts with ATP. Positions 143–145 (KDQ) are interaction with tRNA. Cysteine 193 functions as the Cysteine persulfide intermediate in the catalytic mechanism. The interaction with tRNA stretch occupies residues 298 to 299 (RY).

It belongs to the MnmA/TRMU family.

Its subcellular location is the cytoplasm. It catalyses the reaction S-sulfanyl-L-cysteinyl-[protein] + uridine(34) in tRNA + AH2 + ATP = 2-thiouridine(34) in tRNA + L-cysteinyl-[protein] + A + AMP + diphosphate + H(+). Catalyzes the 2-thiolation of uridine at the wobble position (U34) of tRNA, leading to the formation of s(2)U34. This Trichodesmium erythraeum (strain IMS101) protein is tRNA-specific 2-thiouridylase MnmA.